We begin with the raw amino-acid sequence, 130 residues long: Large ribosomal subunit protein bL12 (130 aa).

The protein belongs to the bacterial ribosomal protein bL12 family. Homodimer. Part of the ribosomal stalk of the 50S ribosomal subunit. Forms a multimeric L10(L12)X complex, where L10 forms an elongated spine to which 2 to 4 L12 dimers bind in a sequential fashion. Binds GTP-bound translation factors.

Forms part of the ribosomal stalk which helps the ribosome interact with GTP-bound translation factors. Is thus essential for accurate translation. In Mycolicibacterium gilvum (strain PYR-GCK) (Mycobacterium gilvum (strain PYR-GCK)), this protein is Large ribosomal subunit protein bL12.